A 298-amino-acid chain; its full sequence is tRNA dimethylallyltransferase (298 aa).

Residue Gly10–Thr17 coordinates ATP. Thr12 to Thr17 contacts substrate. Positions Asp35–Cys38 are interaction with substrate tRNA.

This sequence belongs to the IPP transferase family. As to quaternary structure, monomer. Requires Mg(2+) as cofactor.

It catalyses the reaction adenosine(37) in tRNA + dimethylallyl diphosphate = N(6)-dimethylallyladenosine(37) in tRNA + diphosphate. Catalyzes the transfer of a dimethylallyl group onto the adenine at position 37 in tRNAs that read codons beginning with uridine, leading to the formation of N6-(dimethylallyl)adenosine (i(6)A). This chain is tRNA dimethylallyltransferase, found in Hydrogenobaculum sp. (strain Y04AAS1).